A 278-amino-acid polypeptide reads, in one-letter code: Secreted RxLR effector protein 151 (278 aa).

A signal peptide spans 1–18 (MRNRAVLFGLFFIGYSSC). The short motif at 49–64 (RLLQVDGPKRILAEER) is the RxLR-dEER element.

Belongs to the RxLR effector family.

It localises to the secreted. Its subcellular location is the host endoplasmic reticulum membrane. Functionally, secreted effector that completely suppresses the host cell death induced by cell death-inducing proteins. The chain is Secreted RxLR effector protein 151 from Plasmopara viticola (Downy mildew of grapevine).